A 760-amino-acid polypeptide reads, in one-letter code: Dipeptidyl peptidase 4 (760 aa).

Residues 1-6 lie on the Cytoplasmic side of the membrane; sequence MKTPWK. A helical; Signal-anchor for type II membrane protein transmembrane segment spans residues 7 to 28; the sequence is VLLGLLGVAALVTIITVPIVLL. Residues 29–760 are Extracellular-facing; the sequence is SKDEAAADSR…HFLQQCFSLH (732 aa). Residues Asn83, Asn90, Asn144, Asn213, Asn223, Asn315, and Asn328 are each glycosylated (N-linked (GlcNAc...) asparagine). 4 disulfide bridges follow: Cys322–Cys333, Cys379–Cys388, Cys438–Cys441, and Cys448–Cys466. Asn514 carries an N-linked (GlcNAc...) asparagine glycan. Ser624 acts as the Charge relay system in catalysis. Cys643 and Cys756 are oxidised to a cystine. N-linked (GlcNAc...) asparagine glycosylation occurs at Asn679. Residues Asp702 and His734 each act as charge relay system in the active site.

Belongs to the peptidase S9B family. DPPIV subfamily. Monomer. Homodimer. Heterodimer with Seprase (FAP). Requires homodimerization for optimal dipeptidyl peptidase activity and T-cell costimulation. Found in a membrane raft complex, at least composed of BCL10, CARD11, DPP4 and IKBKB. Associates with collagen. Interacts with PTPRC; the interaction is enhanced in an interleukin-12-dependent manner in activated lymphocytes. Interacts (via extracellular domain) with ADA; does not inhibit its dipeptidyl peptidase activity. Interacts with CAV1 (via the N-terminus); the interaction is direct. Interacts (via cytoplasmic tail) with CARD11 (via PDZ domain); its homodimerization is necessary for interaction with CARD11. Interacts with IGF2R; the interaction is direct. Interacts with GPC3. In terms of processing, the soluble form (Dipeptidyl peptidase 4 soluble form also named SDPP) derives from the membrane form (Dipeptidyl peptidase 4 membrane form also named MDPP) by proteolytic processing. Post-translationally, N- and O-Glycosylated. Phosphorylated. Mannose 6-phosphate residues in the carbohydrate moiety are necessary for interaction with IGF2R in activated T-cells. Mannose 6-phosphorylation is induced during T-cell activation.

It localises to the secreted. Its subcellular location is the cell membrane. The protein resides in the apical cell membrane. It is found in the cell projection. The protein localises to the invadopodium membrane. It localises to the lamellipodium membrane. Its subcellular location is the cell junction. The protein resides in the membrane raft. The enzyme catalyses Release of an N-terminal dipeptide, Xaa-Yaa-|-Zaa-, from a polypeptide, preferentially when Yaa is Pro, provided Zaa is neither Pro nor hydroxyproline.. With respect to regulation, inhibited by GPC3 and diprotin A. Cell surface glycoprotein receptor involved in the costimulatory signal essential for T-cell receptor (TCR)-mediated T-cell activation. Acts as a positive regulator of T-cell coactivation, by binding at least ADA, CAV1, IGF2R, and PTPRC. Its binding to CAV1 and CARD11 induces T-cell proliferation and NF-kappa-B activation in a T-cell receptor/CD3-dependent manner. Its interaction with ADA also regulates lymphocyte-epithelial cell adhesion. In association with FAP is involved in the pericellular proteolysis of the extracellular matrix (ECM), the migration and invasion of endothelial cells into the ECM. May be involved in the promotion of lymphatic endothelial cells adhesion, migration and tube formation. When overexpressed, enhanced cell proliferation, a process inhibited by GPC3. Also acts as a serine exopeptidase with a dipeptidyl peptidase activity that regulates various physiological processes by cleaving peptides in the circulation, including many chemokines, mitogenic growth factors, neuropeptides and peptide hormones. Removes N-terminal dipeptides sequentially from polypeptides having unsubstituted N-termini provided that the penultimate residue is proline. This chain is Dipeptidyl peptidase 4 (Dpp4), found in Mus musculus (Mouse).